Reading from the N-terminus, the 268-residue chain is Undecaprenyl-diphosphatase (268 aa).

Transmembrane regions (helical) follow at residues 47–67 (FAVL…FVKL), 83–103 (FVIG…AFGG), 109–129 (LFNP…LLWV), 144–164 (FPLL…IPGV), 184–204 (AAEF…VYDL), 217–237 (IIVA…VKTF), and 248–268 (LFAW…ALGL).

The protein belongs to the UppP family.

It localises to the cell inner membrane. The enzyme catalyses di-trans,octa-cis-undecaprenyl diphosphate + H2O = di-trans,octa-cis-undecaprenyl phosphate + phosphate + H(+). Functionally, catalyzes the dephosphorylation of undecaprenyl diphosphate (UPP). Confers resistance to bacitracin. The chain is Undecaprenyl-diphosphatase from Rhodopseudomonas palustris (strain ATCC BAA-98 / CGA009).